The primary structure comprises 444 residues: D(2) dopamine receptor (444 aa).

The Extracellular segment spans residues 1 to 37 (MDPLNLSWYDDDPESRNWSRPFNGSEGKADRPPYNYY). N-linked (GlcNAc...) asparagine glycosylation is found at Asn-5, Asn-17, and Asn-23. Residues 38–60 (AMLLTLLIFVIVFGNVLVCMAVS) form a helical membrane-spanning segment. Topologically, residues 61–70 (REKALQTTTN) are cytoplasmic. Residues 71-93 (YLIVSLAVADLLVATLVMPWVVY) form a helical membrane-spanning segment. Residues 94–108 (LEVVGEWKFSRIHCD) lie on the Extracellular side of the membrane. Cys-107 and Cys-182 are joined by a disulfide. The helical transmembrane segment at 109–130 (IFVTLDVMMCTASILNLCAISI) threads the bilayer. At 131–151 (DRYTAVAMPMLYNTRYSSKRR) the chain is on the cytoplasmic side. The helical transmembrane segment at 152 to 172 (VTVMIAIVWVLSFTISCPMLF) threads the bilayer. Residues 173-188 (GLNNTDQNECIIANPA) lie on the Extracellular side of the membrane. Residues 189 to 213 (FVVYSSIVSFYVPFIVTLLVYIKIY) form a helical membrane-spanning segment. Residues 211–374 (KIYIVLRRRR…SQQKEKKATQ (164 aa)) form an interaction with PPP1R9B region. Topologically, residues 214-374 (IVLRRRRKRV…SQQKEKKATQ (161 aa)) are cytoplasmic. The interval 281–332 (MEMLSSTSPPERTRYSPIPPSHHQLTLPDPSHHGLHSTPDSPAKPEKNGHAK) is disordered. The chain crosses the membrane as a helical span at residues 375-396 (MLAIVLGVFIICWLPFFITHIL). Over 397–410 (NIHCDCNIPPVLYS) the chain is Extracellular. A disulfide bridge links Cys-400 with Cys-402. Residues 411–432 (AFTWLGYVNSAVNPIIYTTFNI) form a helical membrane-spanning segment. The Cytoplasmic segment spans residues 433 to 444 (EFRKAFLKILHC). Cys-444 carries S-palmitoyl cysteine lipidation.

This sequence belongs to the G-protein coupled receptor 1 family. In terms of assembly, forms homo- and heterooligomers with DRD4. The interaction with DRD4 may modulate agonist-induced downstream signaling. Interacts with CADPS and CADPS2. Interacts with GPRASP1, PPP1R9B and CLIC6. Interacts with ARRB2. Interacts with HTR2A. Interacts with DRD1. Interacts with KCNA2. Palmitoylated. Palmitoylation which is required for proper localization to the plasma membrane and stability of the receptor could be carried on by ZDHHC4, ZDHHC3 and ZDHHC8.

The protein localises to the cell membrane. The protein resides in the golgi apparatus membrane. Its function is as follows. Dopamine receptor whose activity is mediated by G proteins which inhibit adenylyl cyclase. Positively regulates postnatal regression of retinal hyaloid vessels via suppression of VEGFR2/KDR activity, downstream of OPN5. The protein is D(2) dopamine receptor (DRD2) of Bos taurus (Bovine).